Reading from the N-terminus, the 38-residue chain is DNA binding protein VP8 (38 aa).

Positions 1 to 16 are enriched in basic residues; that stretch reads MKRKPMSRKASQKTFK. The disordered stretch occupies residues 1-38; sequence MKRKPMSRKASQKTFKKNTGVQRMNHLNPRAMRGGIRL.

It belongs to the microviridae J protein family.

The protein localises to the virion. Its subcellular location is the host cytoplasm. In terms of biological role, mediates ssDNA packaging into virion, it locates to the internal surface of the capsid, thereby displacing the internal scaffolding protein VP3 during virion formation. Additionally, protein VP8 plays a role in viral attachment to the host cell. The sequence is that of DNA binding protein VP8 from Bdellovibrio phage phiMH2K (Bacteriophage phiMH2K).